Reading from the N-terminus, the 347-residue chain is Spermidine/putrescine import ATP-binding protein PotA (347 aa).

Positions 6–236 constitute an ABC transporter domain; the sequence is IELRDISKHY…PKNSFVAKFI (231 aa). ATP is bound at residue 38–45; sequence GPSGCGKT.

The protein belongs to the ABC transporter superfamily. Spermidine/putrescine importer (TC 3.A.1.11.1) family. The complex is composed of two ATP-binding proteins (PotA), two transmembrane proteins (PotB and PotC) and a solute-binding protein (PotD).

It is found in the cell membrane. The catalysed reaction is ATP + H2O + polyamine-[polyamine-binding protein]Side 1 = ADP + phosphate + polyamineSide 2 + [polyamine-binding protein]Side 1.. In terms of biological role, part of the ABC transporter complex PotABCD involved in spermidine/putrescine import. Responsible for energy coupling to the transport system. In Clostridioides difficile (strain 630) (Peptoclostridium difficile), this protein is Spermidine/putrescine import ATP-binding protein PotA.